Here is a 162-residue protein sequence, read N- to C-terminus: Probable ergosterol biosynthetic protein 28 homolog (162 aa).

Helical transmembrane passes span 7 to 25 (AWMSIVVVQAMGSVWMCYA), 40 to 60 (LSRAHALPLALLCILRIVLIF), 69 to 89 (IAHILLSILTAIHTMTEVFFY), and 96 to 116 (IVTVTEVTLNSFSVVVMLTFL).

This sequence belongs to the ERG28 family. Expressed in tissues including muscles, intestine and neurons.

It localises to the endoplasmic reticulum membrane. Its subcellular location is the cell projection. It is found in the dendrite. In terms of biological role, promotes the translocation of slo-1 potassium ion channels from the endoplasmic reticulum to its final destination at the plasma membrane, probably by shielding from premature proteasomal degradation in the endoplasmic reticulum. Maintains the levels of slo-1 potassium ion channel at the presynaptic neurons. The sequence is that of Probable ergosterol biosynthetic protein 28 homolog from Caenorhabditis elegans.